We begin with the raw amino-acid sequence, 834 residues long: MPRYPFRRFGFGALRRLLYLWVRSETINQSAFTLKIDRSKPVLYVLQQPSVSDLAVVDTECRKAGLPRPVMPVAVGDAIEPAAFFYLTPEPDWLGRQDKRGASPTLVRMLAAVGQNGLDDAQIIPVSVFWGQSPDSESSPWKLLFADNWAVTGRLRKLARILILGRKTRVQFSAPIHLRELVEQGKGHERTLRMVNRILRVHFRNLKTAVIGPDLSHRRNLVKGLLRAPLVRQAINEECESERISQEKAEGIALRYANEIASDFSYPVIRFLEVILSWFWNKLYEGVKVNHIERVQDVAQGNEIVYVPCHRSHIDYLLLSYLLFRNGLTPPHIAAGINLNMPVIGSILRRGGAFFMRRSFKGNQLYTAVFNEYLHTLFSRGFSTEYFVEGGRSRTGRMLHPRTGMLAITLRSFLRDSRRPIVFVPVYIGYERVLEGRTYLGELRGATKKKESIFDLFKVVGALKQRFGQVWVNFGEPIHLDQFLDRHQPDWQDQDLGPEYRPDWLPQTTNLLAKDVARHLNDAAAINPVNLVALALLSTSRQALDESALARILDLYLALLRKVPYSPSATLPDGDGQALIEYVKSMNLLAEQKDALGRILYLDEQNAVLATYYRNNVLHVFALPALIASFFQSNSRISREQLLRFARALYPYLQAELFIRWSLDELDAVIDQWLAALVEQGLLRQENDTFIRPAPSSRQYVLLILLARSVTQTLQRFYMAIALLLNAGQNALTAEELENLCTVMAQRLSILHGLNAPEFFDKSLFRHFIQTLLDLRVLRKDEAGKLSYHELLGELAEGAAKRVLPAEIRLSIRQVALERPAEEAAAESNDAAAN.

Positions 309–314 (CHRSHI) match the HXXXXD motif motif.

This sequence belongs to the GPAT/DAPAT family.

It is found in the cell inner membrane. It catalyses the reaction sn-glycerol 3-phosphate + an acyl-CoA = a 1-acyl-sn-glycero-3-phosphate + CoA. It functions in the pathway phospholipid metabolism; CDP-diacylglycerol biosynthesis; CDP-diacylglycerol from sn-glycerol 3-phosphate: step 1/3. This is Glycerol-3-phosphate acyltransferase from Pseudomonas aeruginosa (strain UCBPP-PA14).